The sequence spans 109 residues: Protein AC78 (109 aa).

The helical transmembrane segment at 61–81 (GIIILISVVAFIALFLLLYVI) threads the bilayer.

Its subcellular location is the host membrane. The protein resides in the virion. Plays an essential role in budded virus production and occlusion body formation. In Autographa californica nuclear polyhedrosis virus (AcMNPV), this protein is Protein AC78 (AC78).